Here is a 196-residue protein sequence, read N- to C-terminus: V-type proton ATPase proteolipid subunit (196 aa).

Over 1–25 the chain is Lumenal; that stretch reads MFQLLSFLLSGEATAVERIITDACP. Residues 26–46 traverse the membrane as a helical segment; sequence VYAPFFGAMGVTAALVFTVMG. The Cytoplasmic segment spans residues 47–72; the sequence is AAYGTAKASVGISNMGVMKPDLVIKA. Residues 73 to 93 form a helical membrane-spanning segment; that stretch reads FIPVIFAGVIAIYGLIICVIL. The Lumenal segment spans residues 94–111; sequence VGGIKPNANYTLMKSFTD. Residues 112-132 form a helical membrane-spanning segment; sequence LGAGLTVGLCGLAAGMAIGIV. At 133–150 the chain is on the cytoplasmic side; sequence GDSGVRAFGQQPKLYVIM. The helical transmembrane segment at 151 to 171 threads the bilayer; the sequence is MLILIFSEALGLYGLIIGILL. Over 172–196 the chain is Lumenal; the sequence is SSVSDTYCPGQALVPLNSGNVIGKN.

Belongs to the V-ATPase proteolipid subunit family. V-ATPase is a heteromultimeric enzyme composed of a peripheral catalytic V1 complex (main components: subunits A, B, C, D, E, and F) attached to an integral membrane V0 proton pore complex (main component: the proteolipid protein; which is present as a hexamer that forms the proton-conducting pore).

It localises to the vacuole membrane. Functionally, proton-conducting pore forming subunit of the membrane integral V0 complex of vacuolar ATPase. V-ATPase is responsible for acidifying a variety of intracellular compartments in eukaryotic cells. In Dictyostelium discoideum (Social amoeba), this protein is V-type proton ATPase proteolipid subunit (vatP).